A 347-amino-acid polypeptide reads, in one-letter code: MSVMFDPQAAIYPFPPKPTPLNDDEKQFYREKIKRLLKERNAVMVAHYYTDPEIQQLAEETGGCISDSLEMARFGAKHAASTLLVAGVRFMGETAKILSPEKNILMPTLAAECSLDLGCPIDEFSAFCDAHPDRTVVVYANTSAAVKARADWVVTSSIAVELIEHLDSLGEKIIWAPDRHLGNYVQKQTGADVLCWQGACIVHDEFKTQALTRLKKIYPYAALLVHPESPQSIVEMADAVGSTSQLIKAAKTLPHRQLIVATDRGIFYKMQQAVPEKELLEAPTAGEGATCRSCAHCPWMAMNGLKAIAEGLEQGGAAHEIQVDAALREGALLPLNRMLDFAATLRA.

Iminosuccinate contacts are provided by His47 and Ser68. Cys113 contributes to the [4Fe-4S] cluster binding site. Residues Tyr139–Asn141 and Ser156 contribute to the iminosuccinate site. A [4Fe-4S] cluster-binding site is contributed by Cys200. Residues His226–Glu228 and Thr243 each bind iminosuccinate. Cys297 contacts [4Fe-4S] cluster.

This sequence belongs to the quinolinate synthase family. Type 1 subfamily. [4Fe-4S] cluster is required as a cofactor.

The protein localises to the cytoplasm. It carries out the reaction iminosuccinate + dihydroxyacetone phosphate = quinolinate + phosphate + 2 H2O + H(+). It functions in the pathway cofactor biosynthesis; NAD(+) biosynthesis; quinolinate from iminoaspartate: step 1/1. Catalyzes the condensation of iminoaspartate with dihydroxyacetone phosphate to form quinolinate. In Salmonella enteritidis PT4 (strain P125109), this protein is Quinolinate synthase.